Consider the following 420-residue polypeptide: Glycogen synthase kinase-3 beta (420 aa).

Residues 1–24 show a composition bias toward polar residues; it reads MSGRPRTTSFAESCKPVQQPSSFG. Residues 1–50 are disordered; that stretch reads MSGRPRTTSFAESCKPVQQPSSFGSMKVSRDKDGSKVTTVVATPGQGPDR. Residues 56 to 340 enclose the Protein kinase domain; it reads YTDTKVIGNG…PLDACAHSFF (285 aa). ATP contacts are provided by residues 62-70 and Lys-85; that span reads IGNGSFGVV. Asp-181 functions as the Proton acceptor in the catalytic mechanism. Positions 384 to 420 are disordered; that stretch reads NQAAVSTTSNTTSTSDSNTGERGSTNNAASASASNSS. Composition is skewed to low complexity over residues 389–401 and 409–420; these read STTS…SDSN and NNAASASASNSS.

This sequence belongs to the protein kinase superfamily. CMGC Ser/Thr protein kinase family. GSK-3 subfamily. Phosphorylated. Activated by phosphorylation at Tyr-216.

It is found in the cytoplasm. It localises to the nucleus. Its subcellular location is the cell membrane. It carries out the reaction L-seryl-[tau protein] + ATP = O-phospho-L-seryl-[tau protein] + ADP + H(+). The catalysed reaction is L-threonyl-[tau protein] + ATP = O-phospho-L-threonyl-[tau protein] + ADP + H(+). In terms of biological role, plays a role in the organization of the formation of the main body axis of developing embryo. Acts as an inhibitor of differentiation of primary neurons. Inhibits the ability of ectopically expressed NEUROD1 and other bHLH factors to promote early retinal cell differentiation. May participate in the Wnt signaling pathway. May regulate the circadian clock via phosphorylation of the major clock components. The sequence is that of Glycogen synthase kinase-3 beta (gsk3b) from Xenopus laevis (African clawed frog).